We begin with the raw amino-acid sequence, 372 residues long: 4-hydroxy-3-methylbut-2-en-1-yl diphosphate synthase (flavodoxin) (372 aa).

[4Fe-4S] cluster is bound by residues cysteine 270, cysteine 273, cysteine 305, and glutamate 312.

Belongs to the IspG family. Requires [4Fe-4S] cluster as cofactor.

The enzyme catalyses (2E)-4-hydroxy-3-methylbut-2-enyl diphosphate + oxidized [flavodoxin] + H2O + 2 H(+) = 2-C-methyl-D-erythritol 2,4-cyclic diphosphate + reduced [flavodoxin]. Its pathway is isoprenoid biosynthesis; isopentenyl diphosphate biosynthesis via DXP pathway; isopentenyl diphosphate from 1-deoxy-D-xylulose 5-phosphate: step 5/6. Functionally, converts 2C-methyl-D-erythritol 2,4-cyclodiphosphate (ME-2,4cPP) into 1-hydroxy-2-methyl-2-(E)-butenyl 4-diphosphate. The sequence is that of 4-hydroxy-3-methylbut-2-en-1-yl diphosphate synthase (flavodoxin) from Escherichia coli O139:H28 (strain E24377A / ETEC).